The following is a 452-amino-acid chain: Pentatricopeptide repeat-containing protein At2g30780 (452 aa).

7 PPR repeats span residues 137 to 171 (TASV…THCA), 173 to 207 (TVVT…KLPP), 208 to 242 (NSVT…PVEP), 243 to 273 (DTDT…IKDQ), 350 to 384 (KSSI…GWKL), 385 to 419 (CRSL…NYGL), and 420 to 452 (VTKT…KRGL).

This sequence belongs to the PPR family. P subfamily.

This Arabidopsis thaliana (Mouse-ear cress) protein is Pentatricopeptide repeat-containing protein At2g30780.